The following is a 218-amino-acid chain: 3,4-dihydroxy-2-butanone 4-phosphate synthase (218 aa).

Residues 38–39, Asp-43, 151–155, and Glu-175 contribute to the D-ribulose 5-phosphate site; these read RE and RRGHT. Glu-39 lines the Mg(2+) pocket. His-154 is a binding site for Mg(2+).

Belongs to the DHBP synthase family. Homodimer. Mg(2+) is required as a cofactor. It depends on Mn(2+) as a cofactor.

The enzyme catalyses D-ribulose 5-phosphate = (2S)-2-hydroxy-3-oxobutyl phosphate + formate + H(+). Its pathway is cofactor biosynthesis; riboflavin biosynthesis; 2-hydroxy-3-oxobutyl phosphate from D-ribulose 5-phosphate: step 1/1. Catalyzes the conversion of D-ribulose 5-phosphate to formate and 3,4-dihydroxy-2-butanone 4-phosphate. This Vibrio cholerae serotype O1 (strain M66-2) protein is 3,4-dihydroxy-2-butanone 4-phosphate synthase.